The following is a 221-amino-acid chain: Urease accessory protein UreG (221 aa).

Residue 19–26 (GPVGSGKT) participates in GTP binding.

This sequence belongs to the SIMIBI class G3E GTPase family. UreG subfamily. Homodimer. UreD, UreF and UreG form a complex that acts as a GTP-hydrolysis-dependent molecular chaperone, activating the urease apoprotein by helping to assemble the nickel containing metallocenter of UreC. The UreE protein probably delivers the nickel.

Its subcellular location is the cytoplasm. Its function is as follows. Facilitates the functional incorporation of the urease nickel metallocenter. This process requires GTP hydrolysis, probably effectuated by UreG. This Yersinia enterocolitica serotype O:8 / biotype 1B (strain NCTC 13174 / 8081) protein is Urease accessory protein UreG.